The chain runs to 84 residues: Dolichol phosphate-mannose biosynthesis regulatory protein (84 aa).

The next 2 helical transmembrane spans lie at 11-31 and 49-69; these read FGLV…VILL and YAVL…GLFI.

It belongs to the DPM2 family. Component of the dolichol-phosphate mannose (DPM) synthase complex composed of DPM1, DPM2 and DPM3; in the complex interacts directly with DPM3. Component of the glycosylphosphatidylinositol-N-acetylglucosaminyltransferase (GPI-GnT) complex composed at least by PIGA, PIGC, PIGH, PIGP, PIGQ, PIGY and DPM2. Interacts with PIGA, PIGC and PIGQ.

It localises to the endoplasmic reticulum membrane. It participates in protein modification; protein glycosylation. Regulates the biosynthesis of dolichol phosphate-mannose. Regulatory subunit of the dolichol-phosphate mannose (DPM) synthase complex; essential for the ER localization and stable expression of DPM1. Part of the glycosylphosphatidylinositol-N-acetylglucosaminyltransferase (GPI-GnT) complex that catalyzes the transfer of N-acetylglucosamine from UDP-N-acetylglucosamine to phosphatidylinositol and participates in the first step of GPI biosynthesis. May act by regulating the GPI-GNT complex. This is Dolichol phosphate-mannose biosynthesis regulatory protein from Cricetulus griseus (Chinese hamster).